We begin with the raw amino-acid sequence, 103 residues long: Small ribosomal subunit protein uS10 (103 aa).

Belongs to the universal ribosomal protein uS10 family. In terms of assembly, part of the 30S ribosomal subunit.

Involved in the binding of tRNA to the ribosomes. In Shewanella loihica (strain ATCC BAA-1088 / PV-4), this protein is Small ribosomal subunit protein uS10.